The primary structure comprises 214 residues: Pyridoxine/pyridoxamine 5'-phosphate oxidase (214 aa).

Substrate contacts are provided by residues 8–11 (RTNY) and lysine 66. FMN contacts are provided by residues 61-66 (RIVLIK), 76-77 (FT), arginine 82, lysine 83, and glutamine 105. The substrate site is built by tyrosine 123, arginine 127, and serine 131. FMN is bound by residues 140-141 (QS) and tryptophan 184. Residue 190-192 (RLH) coordinates substrate. Arginine 194 contacts FMN.

This sequence belongs to the pyridoxamine 5'-phosphate oxidase family. Homodimer. Requires FMN as cofactor.

It catalyses the reaction pyridoxamine 5'-phosphate + O2 + H2O = pyridoxal 5'-phosphate + H2O2 + NH4(+). The catalysed reaction is pyridoxine 5'-phosphate + O2 = pyridoxal 5'-phosphate + H2O2. It participates in cofactor metabolism; pyridoxal 5'-phosphate salvage; pyridoxal 5'-phosphate from pyridoxamine 5'-phosphate: step 1/1. The protein operates within cofactor metabolism; pyridoxal 5'-phosphate salvage; pyridoxal 5'-phosphate from pyridoxine 5'-phosphate: step 1/1. In terms of biological role, catalyzes the oxidation of either pyridoxine 5'-phosphate (PNP) or pyridoxamine 5'-phosphate (PMP) into pyridoxal 5'-phosphate (PLP). The chain is Pyridoxine/pyridoxamine 5'-phosphate oxidase from Burkholderia pseudomallei (strain 1106a).